The chain runs to 892 residues: Translation initiation factor IF-2 (892 aa).

Residues 51-296 (REHGSAPNKL…KGKRKPSTLQ (246 aa)) are disordered. A compositionally biased stretch (polar residues) spans 68 to 82 (STLNIPSTGGKSKSV). Residues 99–217 (EQAKAEEQAQ…KMAAENEGKW (119 aa)) show a composition bias toward basic and acidic residues. Over residues 224–237 (QTESADYHVTTSQH) the composition is skewed to polar residues. The segment covering 239-254 (RAAEDENDAKVEGDRR) has biased composition (basic and acidic residues). Over residues 255 to 269 (SRTRGGKATKQKKGN) the composition is skewed to basic residues. The segment covering 270-283 (KLSESKADREEARA) has biased composition (basic and acidic residues). Residues 391–560 (HRAPVVTIMG…LLQAEVMELK (170 aa)) enclose the tr-type G domain. The segment at 400-407 (GHVDHGKT) is G1. Residue 400–407 (GHVDHGKT) participates in GTP binding. The G2 stretch occupies residues 425 to 429 (GITQH). Positions 446–449 (DTPG) are G3. Residues 446-450 (DTPGH) and 500-503 (NKID) contribute to the GTP site. A G4 region spans residues 500–503 (NKID). Positions 536 to 538 (SAK) are G5.

This sequence belongs to the TRAFAC class translation factor GTPase superfamily. Classic translation factor GTPase family. IF-2 subfamily.

It is found in the cytoplasm. In terms of biological role, one of the essential components for the initiation of protein synthesis. Protects formylmethionyl-tRNA from spontaneous hydrolysis and promotes its binding to the 30S ribosomal subunits. Also involved in the hydrolysis of GTP during the formation of the 70S ribosomal complex. This chain is Translation initiation factor IF-2, found in Yersinia enterocolitica serotype O:8 / biotype 1B (strain NCTC 13174 / 8081).